A 154-amino-acid chain; its full sequence is Crossover junction endodeoxyribonuclease RuvC (154 aa).

Residues D7, E67, and D139 contribute to the active site. Mg(2+)-binding residues include D7, E67, and D139.

Belongs to the RuvC family. In terms of assembly, homodimer which binds Holliday junction (HJ) DNA. The HJ becomes 2-fold symmetrical on binding to RuvC with unstacked arms; it has a different conformation from HJ DNA in complex with RuvA. In the full resolvosome a probable DNA-RuvA(4)-RuvB(12)-RuvC(2) complex forms which resolves the HJ. Requires Mg(2+) as cofactor.

It localises to the cytoplasm. The catalysed reaction is Endonucleolytic cleavage at a junction such as a reciprocal single-stranded crossover between two homologous DNA duplexes (Holliday junction).. Functionally, the RuvA-RuvB-RuvC complex processes Holliday junction (HJ) DNA during genetic recombination and DNA repair. Endonuclease that resolves HJ intermediates. Cleaves cruciform DNA by making single-stranded nicks across the HJ at symmetrical positions within the homologous arms, yielding a 5'-phosphate and a 3'-hydroxyl group; requires a central core of homology in the junction. The consensus cleavage sequence is 5'-(A/T)TT(C/G)-3'. Cleavage occurs on the 3'-side of the TT dinucleotide at the point of strand exchange. HJ branch migration catalyzed by RuvA-RuvB allows RuvC to scan DNA until it finds its consensus sequence, where it cleaves and resolves the cruciform DNA. The sequence is that of Crossover junction endodeoxyribonuclease RuvC from Prochlorococcus marinus (strain NATL1A).